A 427-amino-acid polypeptide reads, in one-letter code: MLDIKWIRENPETLDKALAKRGAAPLSSELIALDEKRREHVGKVQAAQERRNAASKEIGKAMAAKDMGTAEKLKAEVGELKDFLAHAEEDERRLSKELSDALSTIPNIPLDDVPLGKDESDNVELRRIGNPHNFSFQPKEHFELGEALGYMDFERAAKLAGARFTVLKGPLARLERALGQFMLDLHTTEHGYTEVMPPLMVRDEAVYGTGQLPKFSEDLFRTTDGRWLIPTAEVPLTNLVAEEIVDMKGLPLRFTALTPCFRSEAGSAGRDTRGMLRQHQFLKVEMVSITDAESSVAEHERMTACAEEVLKRLGLPFRTVVLCTGDMGFGAQRTYDIEVWLPGQNTYREISSCSTCGDFQGRRMNARYRPEGEKSTRFVHTLNGSGVAVGRALIAVMENYQQEDGSIHIPEALQPYIGGLTRIEKAA.

Position 231–233 (231–233 (TAE)) interacts with L-serine. Position 262–264 (262–264 (RSE)) interacts with ATP. Residue glutamate 285 participates in L-serine binding. 349-352 (EISS) contacts ATP. Residue serine 385 participates in L-serine binding.

This sequence belongs to the class-II aminoacyl-tRNA synthetase family. Type-1 seryl-tRNA synthetase subfamily. In terms of assembly, homodimer. The tRNA molecule binds across the dimer.

It is found in the cytoplasm. The enzyme catalyses tRNA(Ser) + L-serine + ATP = L-seryl-tRNA(Ser) + AMP + diphosphate + H(+). It catalyses the reaction tRNA(Sec) + L-serine + ATP = L-seryl-tRNA(Sec) + AMP + diphosphate + H(+). It functions in the pathway aminoacyl-tRNA biosynthesis; selenocysteinyl-tRNA(Sec) biosynthesis; L-seryl-tRNA(Sec) from L-serine and tRNA(Sec): step 1/1. Catalyzes the attachment of serine to tRNA(Ser). Is also able to aminoacylate tRNA(Sec) with serine, to form the misacylated tRNA L-seryl-tRNA(Sec), which will be further converted into selenocysteinyl-tRNA(Sec). The protein is Serine--tRNA ligase of Brucella canis (strain ATCC 23365 / NCTC 10854 / RM-666).